A 376-amino-acid polypeptide reads, in one-letter code: Growth/differentiation factor 8 (376 aa).

The signal sequence occupies residues 1–22; the sequence is MHLSQIVLYLSLLIALGPVVLS. A propeptide spanning residues 23–267 is cleaved from the precursor; that stretch reads DQEAHQQPSV…ISEGPRRARR (245 aa). Disulfide bonds link Cys273/Cys283, Cys282/Cys341, Cys310/Cys373, and Cys314/Cys375.

Belongs to the TGF-beta family. As to quaternary structure, homodimer; disulfide-linked. In terms of tissue distribution, highly expressed in muscle. Also expressed in other tissues such as eye, gill, ovary, gut and brain. Very low level detected in testis. Not expressed in liver, kidney, stomach or heart.

The protein localises to the secreted. Acts specifically as a negative regulator of skeletal muscle growth. The chain is Growth/differentiation factor 8 from Oreochromis mossambicus (Mozambique tilapia).